We begin with the raw amino-acid sequence, 361 residues long: Glyceraldehyde-3-phosphate dehydrogenase, glycosomal (361 aa).

NAD(+)-binding positions include 13–14 (RI), D39, Q92, and S135. D-glyceraldehyde 3-phosphate is bound by residues 166–168 (SCT), T198, 227–228 (TG), and R250. C167 serves as the catalytic Nucleophile. NAD(+) is bound at residue N336. Residues 359 to 361 (SKM) carry the Microbody targeting signal motif.

This sequence belongs to the glyceraldehyde-3-phosphate dehydrogenase family. Homotetramer.

It is found in the glycosome. The enzyme catalyses D-glyceraldehyde 3-phosphate + phosphate + NAD(+) = (2R)-3-phospho-glyceroyl phosphate + NADH + H(+). It participates in carbohydrate degradation; glycolysis; pyruvate from D-glyceraldehyde 3-phosphate: step 1/5. The chain is Glyceraldehyde-3-phosphate dehydrogenase, glycosomal (GAPG) from Leishmania mexicana.